The chain runs to 229 residues: Peptidase E (229 aa).

Residues Ser-120, Asp-135, and His-157 each act as charge relay system in the active site.

This sequence belongs to the peptidase S51 family.

The protein localises to the cytoplasm. The catalysed reaction is Dipeptidase E catalyzes the hydrolysis of dipeptides Asp-|-Xaa. It does not act on peptides with N-terminal Glu, Asn or Gln, nor does it cleave isoaspartyl peptides.. In terms of biological role, hydrolyzes dipeptides containing N-terminal aspartate residues. May play a role in allowing the cell to use peptide aspartate to spare carbon otherwise required for the synthesis of the aspartate family of amino acids. This chain is Peptidase E (pepE), found in Salmonella typhimurium (strain LT2 / SGSC1412 / ATCC 700720).